The chain runs to 405 residues: 3-hydroxy-3-methylglutaryl-coenzyme A reductase (405 aa).

Catalysis depends on charge relay system residues E100 and D310. The active-site Proton donor is H400.

The protein belongs to the HMG-CoA reductase family.

It catalyses the reaction (R)-mevalonate + 2 NADP(+) + CoA = (3S)-3-hydroxy-3-methylglutaryl-CoA + 2 NADPH + 2 H(+). It functions in the pathway metabolic intermediate biosynthesis; (R)-mevalonate biosynthesis; (R)-mevalonate from acetyl-CoA: step 3/3. Its function is as follows. Converts HMG-CoA to mevalonate. The sequence is that of 3-hydroxy-3-methylglutaryl-coenzyme A reductase (hmgA) from Methanocaldococcus jannaschii (strain ATCC 43067 / DSM 2661 / JAL-1 / JCM 10045 / NBRC 100440) (Methanococcus jannaschii).